Reading from the N-terminus, the 370-residue chain is Putative agmatine deiminase (370 aa).

The Amidino-cysteine intermediate role is filled by Cys361.

The protein belongs to the agmatine deiminase family.

The catalysed reaction is agmatine + H2O = N-carbamoylputrescine + NH4(+). The sequence is that of Putative agmatine deiminase from Shewanella putrefaciens (strain CN-32 / ATCC BAA-453).